The following is a 1193-amino-acid chain: Probable DNA-directed RNA polymerase II subunit RPB2 homolog (1193 aa).

Residue Asp808 coordinates Mg(2+). Zn(2+) is bound by residues Cys1137, Cys1140, Cys1155, and Cys1158. The segment at 1137-1158 (CVPCKSYFKVVKTQNGFFCSGC) adopts a C4-type zinc-finger fold.

Belongs to the RNA polymerase beta chain family.

The catalysed reaction is RNA(n) + a ribonucleoside 5'-triphosphate = RNA(n+1) + diphosphate. Functionally, component of the DNA-dependent RNA polymerase that catalyzes the transcription of DNA into RNA using the four ribonucleoside triphosphates as substrates. Second largest component of RNA polymerase II which synthesizes mRNA precursors and many functional non-coding RNAs. Proposed to contribute to the polymerase catalytic activity and forms the polymerase active center together with the largest subunit. This chain is Probable DNA-directed RNA polymerase II subunit RPB2 homolog, found in Invertebrate iridescent virus 6 (IIV-6).